Reading from the N-terminus, the 833-residue chain is MTFYDHTAIEPKWQAFWADNHTFKTGTDASKPKFYALDMFPYPSGAGLHVGHPEGYTATDILSRFKRAQGHNVLHPMGWDAFGLPAEQYAMDTGNDPAEFTAENIANFKRQINALGFSYDWDREVNTTDPNYYKWTQWIFTKLYEKGLAYEAEVPVNWVEELGTAIANEEVLPDGTSERGGYPVVRKPMRQWMLKITAYAERLLEDLEEVDWPESIKDMQRNWIGKSTGANVTFKVKDTDKDFTVFTTRPDTLFGATYAVLAPEHALVDAITTADQAEAVADYKRQASLKSDLARTDLAKEKTGVWTGSYAINPVNGNEMPVWIADYVLASYGTGAIMAVPAHDERDWEFAKQFKLDIIPVLEGGNVEEAAFTEDGLHINSDFLDGLDKASAIAKMVEWLEAEGVGNEKVTYRLRDWLFSRQRYWGEPIPIIHWEDGTSTAVPESELPLVLPVTKDIRPSGTGESPLANVTDWLEVTREDGVKGRRETNTMPQWAGSSWYYLRYIDPHNTEKLADEELLKQWLPVDIYVGGAEHAVLHLLYARFWHKVLYDLGVVPTKEPFQKLFNQGMILGTSYRDSRGALVATDKVEKRDGSFFHVETGEELEQAPAKMSKSLKNVVNPDDVVEQYGADTLRVYEMFMGPLDASIAWSEEGLEGSRKFLDRVYRLITTKEITEENSGALDKVYNETVKAVTEQVDQMKFNTAIAQLMVFVNAANKEDKLFSDYAKGFVQLIAPFAPHLGEELWQVLTASGESISYVPWPSYDKSKLVENDVEIVVQIKGKVKAKLVVAKDLSREELQEVALANEKVQAEIAGKDIIKVIAVPNKLVNIVIK.

A 'HIGH' region motif is present at residues 41-52; sequence PYPSGAGLHVGH. The 'KMSKS' region motif lies at 610–614; that stretch reads KMSKS. Lys-613 contacts ATP.

It belongs to the class-I aminoacyl-tRNA synthetase family.

The protein resides in the cytoplasm. It catalyses the reaction tRNA(Leu) + L-leucine + ATP = L-leucyl-tRNA(Leu) + AMP + diphosphate. The chain is Leucine--tRNA ligase from Streptococcus pyogenes serotype M28 (strain MGAS6180).